The following is a 128-amino-acid chain: Large ribosomal subunit protein uL22 (128 aa).

It belongs to the universal ribosomal protein uL22 family. Part of the 50S ribosomal subunit.

This protein binds specifically to 23S rRNA; its binding is stimulated by other ribosomal proteins, e.g. L4, L17, and L20. It is important during the early stages of 50S assembly. It makes multiple contacts with different domains of the 23S rRNA in the assembled 50S subunit and ribosome. Its function is as follows. The globular domain of the protein is located near the polypeptide exit tunnel on the outside of the subunit, while an extended beta-hairpin is found that lines the wall of the exit tunnel in the center of the 70S ribosome. The sequence is that of Large ribosomal subunit protein uL22 from Prochlorococcus marinus (strain MIT 9312).